The chain runs to 294 residues: Elongation factor Ts (294 aa).

The involved in Mg(2+) ion dislocation from EF-Tu stretch occupies residues 82-85; it reads TDFV.

It belongs to the EF-Ts family.

The protein resides in the cytoplasm. Functionally, associates with the EF-Tu.GDP complex and induces the exchange of GDP to GTP. It remains bound to the aminoacyl-tRNA.EF-Tu.GTP complex up to the GTP hydrolysis stage on the ribosome. This chain is Elongation factor Ts, found in Nitrosomonas eutropha (strain DSM 101675 / C91 / Nm57).